The following is a 384-amino-acid chain: Succinyl-diaminopimelate desuccinylase (384 aa).

Histidine 71 provides a ligand contact to Zn(2+). Residue aspartate 73 is part of the active site. Aspartate 104 is a Zn(2+) binding site. Glutamate 138 acts as the Proton acceptor in catalysis. Glutamate 139, glutamate 167, and histidine 353 together coordinate Zn(2+).

The protein belongs to the peptidase M20A family. DapE subfamily. As to quaternary structure, homodimer. Zn(2+) is required as a cofactor. Co(2+) serves as cofactor.

The enzyme catalyses N-succinyl-(2S,6S)-2,6-diaminopimelate + H2O = (2S,6S)-2,6-diaminopimelate + succinate. It participates in amino-acid biosynthesis; L-lysine biosynthesis via DAP pathway; LL-2,6-diaminopimelate from (S)-tetrahydrodipicolinate (succinylase route): step 3/3. Its function is as follows. Catalyzes the hydrolysis of N-succinyl-L,L-diaminopimelic acid (SDAP), forming succinate and LL-2,6-diaminopimelate (DAP), an intermediate involved in the bacterial biosynthesis of lysine and meso-diaminopimelic acid, an essential component of bacterial cell walls. The polypeptide is Succinyl-diaminopimelate desuccinylase (Aromatoleum aromaticum (strain DSM 19018 / LMG 30748 / EbN1) (Azoarcus sp. (strain EbN1))).